Consider the following 397-residue polypeptide: MSNVNTLSALAKSGALSGKRVFIRADLNVPFDDAGRISEDTRIRASVPGIRLALDAGAAVMVTSHLGRPKEGALTEADSLAPVAQRLSELLGMQVRLVPDWVDGVSVEPGEVVLLENCRGNVGEKKDDEGLSRKMAALCDVYVNDAFGTAHRAEATTHGIARFAPVACAGPLLEAELDALGRALHDPKRPLVAIVGGSKVSTKLSILQSLADKVDQLVVGGGIANTFMLAAGLPIGKSLAEPEQVEQARAVIEIMKRRGAEVPIPTDVVCAKSFGADAAATVKAAADVAEDDMILDIGPQTAQRLADILKTAGTIVWNGPVGVFEFDQFAHGTEVVARAIADSAGFSIAGGGDTLAAIAKYGIADQTGYISTGGGAFLEFLEGKALPAVAVLQARAA.

Substrate contacts are provided by residues 26-28, arginine 42, 65-68, arginine 119, and arginine 152; these read DLN and HLGR. Residues lysine 203, glutamate 325, and 351–354 each bind ATP; that span reads GGDT.

The protein belongs to the phosphoglycerate kinase family. As to quaternary structure, monomer.

It is found in the cytoplasm. The catalysed reaction is (2R)-3-phosphoglycerate + ATP = (2R)-3-phospho-glyceroyl phosphate + ADP. It functions in the pathway carbohydrate degradation; glycolysis; pyruvate from D-glyceraldehyde 3-phosphate: step 2/5. In Bordetella pertussis (strain Tohama I / ATCC BAA-589 / NCTC 13251), this protein is Phosphoglycerate kinase.